The sequence spans 68 residues: Serine palmitoyltransferase small subunit A (68 aa).

At 1-9 the chain is on the cytoplasmic side; it reads MAFGDAWKQ. Residues 10-26 form a helical membrane-spanning segment; that stretch reads LSWFYYQYLLVTALYML. The Lumenal portion of the chain corresponds to 27–31; it reads EPWER. The helical transmembrane segment at 32 to 54 threads the bilayer; that stretch reads TIFNSLLISVAAMAVYTGYVFMP. Over 55-68 the chain is Cytoplasmic; sequence QHIMAILHYFEVVQ.

The protein belongs to the SPTSS family. SPTSSA subfamily. In terms of assembly, component of the serine palmitoyltransferase (SPT) complex, which is composed of SPTLC1, SPTLC2 or SPTLC3 and SPTSSA or SPTSSB. The heterodimer consisting of SPTLC1 and SPTLC2/SPTLC3 forms the catalytic core of the enzyme, while SPTSSA or SPTSSB subunits determine substrate specificity. SPT also interacts with ORMDL proteins, especially ORMDL3, which negatively regulate SPT activity in the presence of ceramides.

The protein resides in the endoplasmic reticulum membrane. The protein operates within lipid metabolism; sphingolipid metabolism. Component of the serine palmitoyltransferase multisubunit enzyme (SPT) that catalyzes the initial and rate-limiting step in sphingolipid biosynthesis by condensing L-serine and activated acyl-CoA (most commonly palmitoyl-CoA) to form long-chain bases. The SPT complex is composed of SPTLC1, SPTLC2 or SPTLC3 and SPTSSA or SPTSSB. Within this complex, the heterodimer consisting of SPTLC1 and SPTLC2/SPTLC3 forms the catalytic core. Within the SPT complex, SPTSSA stimulates the catalytic activity and plays a role in substrate specificity, which depends upon the overall complex composition. The SPTLC1-SPTLC2-SPTSSA complex shows a strong preference for C16-CoA substrate, while the SPTLC1-SPTLC3-SPTSSA isozyme uses both C14-CoA and C16-CoA as substrates, with a slight preference for C14-CoA. Independently of its action as a SPT component, may be involved in MBOAT7 localization to mitochondria-associated membranes, a membrane bridge between the endoplasmic reticulum and mitochondria, may hence affect MBOAT7-catalyzed incorporation of arachidonic acid into phosphatidylinositol. This is Serine palmitoyltransferase small subunit A (sptssa) from Danio rerio (Zebrafish).